The primary structure comprises 101 residues: NAD(P)H-quinone oxidoreductase subunit 4L, chloroplastic (101 aa).

A run of 3 helical transmembrane segments spans residues 2-22, 32-52, and 64-84; these read ILDSLLILAASVFCIGIYGLI, MSLELLLNAVNINFVAFSNFI, and IFIMTIAAAEAAVGLALILAI.

It belongs to the complex I subunit 4L family. NDH is composed of at least 16 different subunits, 5 of which are encoded in the nucleus.

It localises to the plastid. The protein resides in the chloroplast thylakoid membrane. The enzyme catalyses a plastoquinone + NADH + (n+1) H(+)(in) = a plastoquinol + NAD(+) + n H(+)(out). It carries out the reaction a plastoquinone + NADPH + (n+1) H(+)(in) = a plastoquinol + NADP(+) + n H(+)(out). In terms of biological role, NDH shuttles electrons from NAD(P)H:plastoquinone, via FMN and iron-sulfur (Fe-S) centers, to quinones in the photosynthetic chain and possibly in a chloroplast respiratory chain. The immediate electron acceptor for the enzyme in this species is believed to be plastoquinone. Couples the redox reaction to proton translocation, and thus conserves the redox energy in a proton gradient. The chain is NAD(P)H-quinone oxidoreductase subunit 4L, chloroplastic from Chlorokybus atmophyticus (Soil alga).